The following is a 242-amino-acid chain: Probable 2-phosphosulfolactate phosphatase (242 aa).

It belongs to the ComB family. It depends on Mg(2+) as a cofactor.

The enzyme catalyses (2R)-O-phospho-3-sulfolactate + H2O = (2R)-3-sulfolactate + phosphate. This is Probable 2-phosphosulfolactate phosphatase from Parasynechococcus marenigrum (strain WH8102).